The chain runs to 199 residues: Protein-methionine-sulfoxide reductase heme-binding subunit MsrQ (199 aa).

The next 5 helical transmembrane spans lie at 8–28, 82–102, 116–136, 149–169, and 171–191; these read ITWLKVILHLAGLLPFIWLFW, LWCFAWATLHLTSYALLELGI, PYLTLGIVSWVILFALTLTST, FLHNFVYLVAILTPIHYLWSV, and ILSPQPVIYALLALGLLAWRY.

It belongs to the MsrQ family. As to quaternary structure, heterodimer of a catalytic subunit (MsrP) and a heme-binding subunit (MsrQ). It depends on FMN as a cofactor. Heme b is required as a cofactor.

It is found in the cell inner membrane. Its function is as follows. Part of the MsrPQ system that repairs oxidized periplasmic proteins containing methionine sulfoxide residues (Met-O), using respiratory chain electrons. Thus protects these proteins from oxidative-stress damage caused by reactive species of oxygen and chlorine generated by the host defense mechanisms. MsrPQ is essential for the maintenance of envelope integrity under bleach stress, rescuing a wide series of structurally unrelated periplasmic proteins from methionine oxidation. MsrQ provides electrons for reduction to the reductase catalytic subunit MsrP, using the quinone pool of the respiratory chain. The protein is Protein-methionine-sulfoxide reductase heme-binding subunit MsrQ of Enterobacter sp. (strain 638).